The primary structure comprises 358 residues: cAMP-dependent protein kinase catalytic subunit PRKX (358 aa).

At Met1 the chain carries N-acetylmethionine. A disordered region spans residues 1-34; it reads MEAPGLAQAAAAESDSRKVAEETPDGAPALCPSP. The region spanning 49 to 303 is the Protein kinase domain; the sequence is FDTLATVGTG…ANDVKHHRWF (255 aa). ATP contacts are provided by residues 55 to 63 and Lys78; that span reads VGTGTFGRV. Residue Asp172 is the Proton acceptor of the active site. Thr203 is modified (phosphothreonine). Residues 304–358 enclose the AGC-kinase C-terminal domain; sequence RSVDWEAVPQRKLKPPIVPKIAGDGDTSNFETYPENDWDTAAPVPQKDLEIFKNF.

It belongs to the protein kinase superfamily. AGC Ser/Thr protein kinase family. cAMP subfamily. As to quaternary structure, like other cAMP-dependent protein kinases, the inactive holoenzyme is probably composed of 2 PRKX catalytic subunits and a dimer of regulatory subunits. Interacts (cAMP-dependent) specifically with the regulatory subunits PRKAR1A and PRKAR1B. Compared to other cAMP-dependent serine/threonine protein kinases, does not interact with the 2 other PKA regulatory subunits PRKAR2A and PRKAR2B. Interacts with cAMP-dependent protein kinase inhibitor/PKI proteins; inhibits PRKX. Interacts with GPKOW. Interacts with SMAD6. Interacts with PKD1; involved in differentiation and controlled morphogenesis of the kidney. Interacts with PIN1 (via WW domain). In terms of processing, phosphorylated; autophosphorylates in vitro. Widely expressed (at protein level). Specifically expressed in blood by macrophages and granulocytes according to PubMed:9860982.

The protein localises to the cytoplasm. Its subcellular location is the nucleus. It carries out the reaction L-seryl-[protein] + ATP = O-phospho-L-seryl-[protein] + ADP + H(+). The catalysed reaction is L-threonyl-[protein] + ATP = O-phospho-L-threonyl-[protein] + ADP + H(+). Binding of cAMP to the PRKAR1A or PRKAR1B regulatory subunits induces dissociation of the holoenzyme heterotetramer. The released monomeric PRKX is then active and able to phosphorylate its substrates. In terms of biological role, serine/threonine protein kinase regulated by and mediating cAMP signaling in cells. Acts through phosphorylation of downstream targets that may include CREB, SMAD6 and PKD1 and has multiple functions in cellular differentiation and epithelial morphogenesis. Regulates myeloid cell differentiation through SMAD6 phosphorylation. Involved in nephrogenesis by stimulating renal epithelial cell migration and tubulogenesis. Also involved in angiogenesis through stimulation of endothelial cell proliferation, migration and vascular-like structure formation. This Homo sapiens (Human) protein is cAMP-dependent protein kinase catalytic subunit PRKX (PRKX).